Consider the following 315-residue polypeptide: Methionyl-tRNA formyltransferase (315 aa).

Position 113 to 116 (113 to 116 (SLLP)) interacts with (6S)-5,6,7,8-tetrahydrofolate.

It belongs to the Fmt family.

It catalyses the reaction L-methionyl-tRNA(fMet) + (6R)-10-formyltetrahydrofolate = N-formyl-L-methionyl-tRNA(fMet) + (6S)-5,6,7,8-tetrahydrofolate + H(+). Functionally, attaches a formyl group to the free amino group of methionyl-tRNA(fMet). The formyl group appears to play a dual role in the initiator identity of N-formylmethionyl-tRNA by promoting its recognition by IF2 and preventing the misappropriation of this tRNA by the elongation apparatus. This chain is Methionyl-tRNA formyltransferase, found in Pseudoalteromonas atlantica (strain T6c / ATCC BAA-1087).